Here is a 486-residue protein sequence, read N- to C-terminus: Serine/threonine-protein kinase 4 (486 aa).

The Protein kinase domain occupies 29–280 (FDVLEKLGEG…AIQLLQHPFV (252 aa)). Residues 35–43 (LGEGSYGSV) and Lys58 each bind ATP. Asp148 serves as the catalytic Proton acceptor. Thr182 bears the Phosphothreonine; by autocatalysis mark. Residues 288–324 (ILRDLINEAMDIKLKRQEAQQRELDQEDEENSEEDET) are a coiled coil. The tract at residues 305–332 (EAQQRELDQEDEENSEEDETDSGTMVRA) is disordered. The segment covering 312 to 325 (DQEDEENSEEDETD) has biased composition (acidic residues). The SARAH domain maps to 432–479 (YEFLKTWSVDELQRRLSALDPMMEQEIEEIRQKYQSKRQPILDAIEAK).

This sequence belongs to the protein kinase superfamily. STE Ser/Thr protein kinase family. STE20 subfamily. Homodimer; mediated via the coiled-coil region. Mg(2+) serves as cofactor. Post-translationally, proteolytically cleaved by caspase-3 during apoptosis at Asp-325 resulting in a 37 kDa form. Proteolytic cleavage results in kinase activation and nuclear translocation of the truncated form (MST1/N).

Its subcellular location is the cytoplasm. It is found in the nucleus. It catalyses the reaction L-seryl-[protein] + ATP = O-phospho-L-seryl-[protein] + ADP + H(+). The catalysed reaction is L-threonyl-[protein] + ATP = O-phospho-L-threonyl-[protein] + ADP + H(+). Its activity is regulated as follows. The C-terminal non-catalytic region inhibits the kinase activity, the enzyme is activated by caspase-cleavage. Homodimerization and autophosphorylation of Thr-182 is also required for full activation. Stress-activated, pro-apoptotic kinase which, following caspase-cleavage, enters the nucleus and induces chromatin condensation followed by internucleosomal DNA fragmentation. Key component of the Hippo signaling pathway which plays a pivotal role in organ size control and tumor suppression by restricting proliferation and promoting apoptosis. The core of this pathway is composed of a kinase cascade wherein STK3/MST2 and STK4/MST1, in complex with its regulatory protein SAV1, phosphorylates and activates LATS1/2 in complex with its regulatory protein MOB1, which in turn phosphorylates and inactivates YAP1 oncoprotein and WWTR1/TAZ. Phosphorylation of YAP1 by LATS2 inhibits its translocation into the nucleus to regulate cellular genes important for cell proliferation, cell death, and cell migration. Phosphorylates 'Ser-14' of histone H2B (H2BS14ph) during apoptosis. Phosphorylates FOXO3 upon oxidative stress, which results in its nuclear translocation and cell death initiation. The sequence is that of Serine/threonine-protein kinase 4 (STK4) from Gallus gallus (Chicken).